The sequence spans 407 residues: Patatin-like protein 2 (407 aa).

Residues 22–228 enclose the PNPLA domain; it reads LSIDGGGIRG…AANNPALLAI (207 aa). A GXGXXG motif is present at residues 26–31; sequence GGGIRG. The short motif at 64-68 is the GXSXG element; that stretch reads GTSTG. Ser66 serves as the catalytic Nucleophile. Asp215 serves as the catalytic Proton acceptor. A DGA/G motif is present at residues 215 to 217; sequence DGG. Residue Ser398 is modified to Phosphoserine.

This sequence belongs to the patatin family. In terms of tissue distribution, expressed specifically in roots.

It localises to the cytoplasm. Possesses non-specific lipolytic acyl hydrolase (LAH) activity. Catalyzes the hydrolysis of the galactolipids monogalactosyldiacylglycerol (MGDG) and digalactosyldiacylglycerol (DGDG), and less efficiently the phoshpolipids phosphatidylcholine (PC), phosphatidylethanolamine (PE), phosphatidylglycerol (PG), phosphatidic acid (PA), phosphatidylserine (PS) and phosphatidylinositol (PI). Favors the release of fatty acid at the sn-1 position for PC or PE and the sn-2 position for PG, PA, PS and PI. Negatively affects disease resistance to the necrotic fungal pathogen Botrytis cinerea and the avirulent bacteria Pseudomonas syringae by promoting cell death and reducing the efficiency of the hypersensitive response, respectively. However, PLP2 contributes to resistance to cucumber mosaic virus (CMV), an obligate parasite inducing hypersensitive response. May negatively regulate oxylipin production, possibly via participating in membrane repair that includes removal of oxidatively modified lipids. This is Patatin-like protein 2 (PLP2) from Arabidopsis thaliana (Mouse-ear cress).